Reading from the N-terminus, the 534-residue chain is Cytochrome P450 monooxygenase CYP4 (534 aa).

A helical transmembrane segment spans residues 46–66 (TIIFCVLMSLVGYIVSRIIWG). N-linked (GlcNAc...) asparagine glycosylation occurs at asparagine 220. Cysteine 477 is a binding site for heme. Asparagine 515 carries an N-linked (GlcNAc...) asparagine glycan.

Belongs to the cytochrome P450 family. Heme serves as cofactor.

The protein localises to the membrane. It participates in secondary metabolite biosynthesis. Its function is as follows. Cytochrome P450 monooxygenase; part of the gene cluster that mediates the biosynthesis of a tyrosine-derived cytochalasan acting as a fungal signal recognized by resistant rice plants and leads to avirulence in Pi33 resistant rice cultivars. The first step in the pathway is catalyzed by the hybrid PKS-NRPS ACE1, assisted by the enoyl reductase RAP1, that are responsible for fusion of the tyrosine precursor and the polyketide backbone. The polyketide synthase module (PKS) of ACE1 is responsible for the synthesis of the polyketide backbone and the downstream nonribosomal peptide synthetase (NRPS) amidates the carboxyl end of the polyketide with the tyrosine precursor. Because ACE1 lacks a designated enoylreductase (ER) domain, the required activity is provided the enoyl reductase RAP1. Reduction by the hydrolyase ORFZ, followed by dehydration and intra-molecular Diels-Alder cyclization by the Diels-Alderase ORF3 then yield the required isoindolone-fused macrocycle. A number of oxidative steps catalyzed by the tailoring enzymes identified within the cluster, including cytochrome P450 monooxygenases CYP1 to CYP4, the FAD-linked oxidoreductase OXR2 and the short-chain dehydrogenase/reductase OXR1, are further required to afford the final cytochalasans that confer avirulence and which have still to be identified. The monooxygenase CYP1 has been shown to be a site-selective C-18 hydroxylase whereas the function of CYP3 is the site-selective epoxidation of the C-6/C-7 olefin that is present in some intermediate compounds. Finally, SYN2 and RAP2 are not required for avirulence in Pi33 resistant rice cultivars. This Pyricularia oryzae (strain 70-15 / ATCC MYA-4617 / FGSC 8958) (Rice blast fungus) protein is Cytochrome P450 monooxygenase CYP4.